The following is a 1118-amino-acid chain: DNA mismatch repair protein MSH1, mitochondrial (1118 aa).

An ATP-binding site is contributed by 768–775; it reads GPNGGGKS.

Belongs to the DNA mismatch repair MutS family.

The protein resides in the mitochondrion. Its subcellular location is the plastid. The protein localises to the chloroplast. Its function is as follows. DNA mismatch repair protein specifically involved in maintenance of mitochondrial genome configuration by controlling specific rearranged portion. Functions by suppressing asymmetric recombination at some repeat pairs. The protein is DNA mismatch repair protein MSH1, mitochondrial (MSH1) of Arabidopsis thaliana (Mouse-ear cress).